The sequence spans 82 residues: Cytochrome b559 subunit alpha (82 aa).

Residues 22–36 form a helical membrane-spanning segment; sequence VIHAITLPSIFLAGF. H24 is a heme binding site.

This sequence belongs to the PsbE/PsbF family. In terms of assembly, heterodimer of an alpha subunit and a beta subunit. PSII is composed of 1 copy each of membrane proteins PsbA, PsbB, PsbC, PsbD, PsbE, PsbF, PsbH, PsbI, PsbJ, PsbK, PsbL, PsbM, PsbT, PsbX, PsbY, PsbZ, Psb30/Ycf12, peripheral proteins PsbO, CyanoQ (PsbQ), PsbU, PsbV and a large number of cofactors. It forms dimeric complexes. Heme b serves as cofactor.

It is found in the cellular thylakoid membrane. Functionally, this b-type cytochrome is tightly associated with the reaction center of photosystem II (PSII). PSII is a light-driven water:plastoquinone oxidoreductase that uses light energy to abstract electrons from H(2)O, generating O(2) and a proton gradient subsequently used for ATP formation. It consists of a core antenna complex that captures photons, and an electron transfer chain that converts photonic excitation into a charge separation. The protein is Cytochrome b559 subunit alpha of Synechococcus sp. (strain CC9311).